Here is a 423-residue protein sequence, read N- to C-terminus: AUGMIN subunit 4 (423 aa).

Positions 267 to 287 form a coiled coil; sequence IEEIERDEAALREDLYSADRK.

The protein belongs to the HAUS4 family. In terms of assembly, part of the augmin complex composed of 8 subunits. The complex acts on microtubules and interacts with gamma-tubulin in spindles and the phragmoplast.

The protein localises to the cytoplasm. Its subcellular location is the cytoskeleton. It is found in the spindle. It localises to the phragmoplast. Involved in microtubules reorganization during spindle and phragmoplast development. The protein is AUGMIN subunit 4 (AUG4) of Arabidopsis thaliana (Mouse-ear cress).